A 232-amino-acid chain; its full sequence is E3 ubiquitin-protein ligase RNF125 (232 aa).

Residues 1–10 (MGSVLSSDSG) are compositionally biased toward polar residues. Residues 1-27 (MGSVLSSDSGKSAPPSATPRALERRGD) form a disordered region. G2 carries N-myristoyl glycine lipidation. Residues C37 and C40 each coordinate Zn(2+). An RING-type zinc finger spans residues 37–76 (CAVCLEVLHQPVRTRCGHVFCRSCIATSLKNNKWTCPYCR). Positions 43-45 (VLH) are interaction with the C2HC RNF-type zinc finger. Residues C52, H54, C57, C60, C72, C75, C100, and C103 each contribute to the Zn(2+) site. The segment at 100–119 (CAECDTLVCLGEMRAHIRTC) adopts a C2HC RNF-type zinc-finger fold. Residues 109-113 (LGEMR) are interaction with the RING-type zinc finger. Positions 115 and 119 each coordinate Zn(2+). The linker region stretch occupies residues 120 to 128 (QKYIDKYGP). Residues 210–224 (EEALIRRVLDRSLLE) are required for interaction with ubiquitin and for autoubiquitination.

In terms of assembly, interacts with UBE2D1. Interacts with VCP/p97; leading to recruit RNF125 to RIGI and promote ubiquitination of RIGI. In terms of processing, autoubiquitinated, leading to its subsequent proteasomal degradation.

It is found in the golgi apparatus membrane. The enzyme catalyses S-ubiquitinyl-[E2 ubiquitin-conjugating enzyme]-L-cysteine + [acceptor protein]-L-lysine = [E2 ubiquitin-conjugating enzyme]-L-cysteine + N(6)-ubiquitinyl-[acceptor protein]-L-lysine.. It functions in the pathway protein modification; protein ubiquitination. In terms of biological role, E3 ubiquitin-protein ligase that mediates ubiquitination and subsequent proteasomal degradation of target proteins, such as RIGI, MAVS/IPS1, IFIH1/MDA5, JAK1 and p53/TP53. Acts as a negative regulator of type I interferon production by mediating ubiquitination of RIGI at 'Lys-181', leading to RIGI degradation. Mediates ubiquitination and subsequent degradation of p53/TP53. Mediates ubiquitination and subsequent degradation of JAK1. Acts as a positive regulator of T-cell activation. This chain is E3 ubiquitin-protein ligase RNF125 (RNF125), found in Macaca fascicularis (Crab-eating macaque).